The sequence spans 484 residues: Ectonucleoside triphosphate diphosphohydrolase 6 (484 aa).

Over 1–39 the chain is Cytoplasmic; the sequence is MKKGIRYETSRKTSYIFQQPQHGPWQTRMRKISNHGSLR. A helical; Signal-anchor for type II membrane protein transmembrane segment spans residues 40–60; the sequence is VAKVAYPLGLCVGVFIYVAYI. Over 61 to 484 the chain is Lumenal; the sequence is KWHRATATQA…SLNRQKSPAS (424 aa). N220 is a glycosylation site (N-linked (GlcNAc...) asparagine). The active-site Proton acceptor is the E224. A glycan (N-linked (GlcNAc...) asparagine) is linked at N284. Cystine bridges form between C325–C356 and C416–C430.

This sequence belongs to the GDA1/CD39 NTPase family. In terms of assembly, monomer. Ca(2+) serves as cofactor. Requires Mg(2+) as cofactor. In terms of processing, the secreted form may be produced by intracellular processing. Post-translationally, N-glycosylated. Expressed in most tissues, but predominantly in heart.

It is found in the golgi apparatus membrane. It localises to the secreted. Its subcellular location is the cell membrane. It catalyses the reaction a ribonucleoside 5'-diphosphate + H2O = a ribonucleoside 5'-phosphate + phosphate + H(+). It carries out the reaction IDP + H2O = IMP + phosphate + H(+). The catalysed reaction is GDP + H2O = GMP + phosphate + H(+). The enzyme catalyses UDP + H2O = UMP + phosphate + H(+). Glycosylation does not appear to be required for enzymatic activity. Its function is as follows. Catalyzes the hydrolysis of nucleoside triphosphates and diphosphates in a calcium- or magnesium-dependent manner. Has a strong preference for nucleoside diphosphates, preferentially hydrolyzes GDP, IDP, and UDP, with slower hydrolysis of CDP, ITP, GTP, CTP, ADP, and UTP and virtually no hydrolysis of ATP. The membrane bound form might support glycosylation reactions in the Golgi apparatus and, when released from cells, might catalyze the hydrolysis of extracellular nucleotides. The sequence is that of Ectonucleoside triphosphate diphosphohydrolase 6 (ENTPD6) from Homo sapiens (Human).